A 171-amino-acid polypeptide reads, in one-letter code: Ribosome maturation factor RimP (171 aa).

Belongs to the RimP family.

The protein resides in the cytoplasm. Its function is as follows. Required for maturation of 30S ribosomal subunits. The chain is Ribosome maturation factor RimP from Anaeromyxobacter dehalogenans (strain 2CP-C).